We begin with the raw amino-acid sequence, 269 residues long: Integral membrane protein 2C (269 aa).

Phosphothreonine is present on Thr-39. Residues 57–77 (VGGVCYLSMGMVVLLMGLVFA) form a helical; Signal-anchor for type II membrane protein membrane-spanning segment. In terms of domain architecture, BRICHOS spans 138–232 (FGGGDPADII…LCNGKDTYRL (95 aa)). Cys-165 and Cys-224 are disulfide-bonded. An N-linked (GlcNAc...) asparagine glycan is attached at Asn-171.

Belongs to the ITM2 family. In terms of assembly, interacts with BACE1. Interacts with APP. Interacts with STMN2. In terms of processing, type I membrane-bound, as well as soluble, furin has a pre-eminent role in ITM2C proteolytic processing. PCSK7 and PCSK5 may also be involved although to a lesser extent. The soluble form of PCSK7 is incapable of processing ITM2C. Fails to undergo shedding by ADAM10 and intramembrane cleavage by SPPL2B.

The protein localises to the lysosome membrane. The protein resides in the cell membrane. In terms of biological role, negative regulator of amyloid-beta peptide production. May inhibit the processing of APP by blocking its access to alpha- and beta-secretase. Binding to the beta-secretase-cleaved APP C-terminal fragment is negligible, suggesting that ITM2C is a poor gamma-secretase cleavage inhibitor. May play a role in TNF-induced cell death and neuronal differentiation. The protein is Integral membrane protein 2C (ITM2C) of Sus scrofa (Pig).